The chain runs to 152 residues: Small ribosomal subunit protein bS16 (152 aa).

Residues 84–152 (WKWEASNNPQ…EAAAEEEKSE (69 aa)) form a disordered region. Residues 97 to 123 (PGQKAKELAAEKAEKEADRKAAEEEAK) are compositionally biased toward basic and acidic residues. Residues 124–144 (AAAAAPAAEEAPAEEAPAAEA) are compositionally biased toward low complexity.

This sequence belongs to the bacterial ribosomal protein bS16 family.

This Maricaulis maris (strain MCS10) (Caulobacter maris) protein is Small ribosomal subunit protein bS16.